The chain runs to 140 residues: Profilin (140 aa).

This sequence belongs to the profilin family. As to quaternary structure, occurs in many kinds of cells as a complex with monomeric actin in a 1:1 ratio.

Its function is as follows. Binds to actin and affects the structure of the cytoskeleton. At high concentrations, profilin prevents the polymerization of actin, whereas it enhances it at low concentrations. By binding to PIP2, it inhibits the formation of IP3 and DG. The polypeptide is Profilin (Suberites domuncula (Sponge)).